The sequence spans 559 residues: Potassium-transporting ATPase potassium-binding subunit (559 aa).

The next 12 helical transmembrane spans lie at Gly-5–Met-25, Leu-63–Leu-83, Val-131–Leu-151, Ile-173–Gly-193, Val-254–Val-274, Ala-282–Glu-302, Phe-327–Val-347, Ala-356–Val-376, Gly-379–Gly-399, Met-416–Met-436, Leu-483–Ile-503, and Ala-525–Pro-545.

It belongs to the KdpA family. In terms of assembly, the system is composed of three essential subunits: KdpA, KdpB and KdpC.

It is found in the cell inner membrane. Functionally, part of the high-affinity ATP-driven potassium transport (or Kdp) system, which catalyzes the hydrolysis of ATP coupled with the electrogenic transport of potassium into the cytoplasm. This subunit binds the periplasmic potassium ions and delivers the ions to the membrane domain of KdpB through an intramembrane tunnel. The polypeptide is Potassium-transporting ATPase potassium-binding subunit (Klebsiella pneumoniae subsp. pneumoniae (strain ATCC 700721 / MGH 78578)).